A 227-amino-acid chain; its full sequence is Cytochrome c oxidase subunit 2 (227 aa).

Topologically, residues 1 to 14 (MAHAAQVGLQDATS) are mitochondrial intermembrane. Residues 15-45 (PIMEELITFHDHALMIIFLICFLVLYALFLT) traverse the membrane as a helical segment. At 46–59 (LTTKLTNTNISDAQ) the chain is on the mitochondrial matrix side. A helical membrane pass occupies residues 60-87 (EMETVWTILPAIILVLIALPSLRILYMT). Residues 88 to 227 (DEVNDPSLTI…IFEMGPVFTL (140 aa)) lie on the Mitochondrial intermembrane side of the membrane. Positions 161, 196, 198, 200, 204, and 207 each coordinate Cu cation. Glu198 serves as a coordination point for Mg(2+).

This sequence belongs to the cytochrome c oxidase subunit 2 family. Component of the cytochrome c oxidase (complex IV, CIV), a multisubunit enzyme composed of 14 subunits. The complex is composed of a catalytic core of 3 subunits MT-CO1, MT-CO2 and MT-CO3, encoded in the mitochondrial DNA, and 11 supernumerary subunits COX4I1 (or COX4I2), COX5A, COX5B, COX6A1 (or COX6A2), COX6B1 (or COX6B2), COX6C, COX7A2 (or COX7A1), COX7B, COX7C, COX8A and NDUFA4, which are encoded in the nuclear genome. The complex exists as a monomer or a dimer and forms supercomplexes (SCs) in the inner mitochondrial membrane with NADH-ubiquinone oxidoreductase (complex I, CI) and ubiquinol-cytochrome c oxidoreductase (cytochrome b-c1 complex, complex III, CIII), resulting in different assemblies (supercomplex SCI(1)III(2)IV(1) and megacomplex MCI(2)III(2)IV(2)). Found in a complex with TMEM177, COA6, COX18, COX20, SCO1 and SCO2. Interacts with TMEM177 in a COX20-dependent manner. Interacts with COX20. Interacts with COX16. It depends on Cu cation as a cofactor.

Its subcellular location is the mitochondrion inner membrane. It carries out the reaction 4 Fe(II)-[cytochrome c] + O2 + 8 H(+)(in) = 4 Fe(III)-[cytochrome c] + 2 H2O + 4 H(+)(out). In terms of biological role, component of the cytochrome c oxidase, the last enzyme in the mitochondrial electron transport chain which drives oxidative phosphorylation. The respiratory chain contains 3 multisubunit complexes succinate dehydrogenase (complex II, CII), ubiquinol-cytochrome c oxidoreductase (cytochrome b-c1 complex, complex III, CIII) and cytochrome c oxidase (complex IV, CIV), that cooperate to transfer electrons derived from NADH and succinate to molecular oxygen, creating an electrochemical gradient over the inner membrane that drives transmembrane transport and the ATP synthase. Cytochrome c oxidase is the component of the respiratory chain that catalyzes the reduction of oxygen to water. Electrons originating from reduced cytochrome c in the intermembrane space (IMS) are transferred via the dinuclear copper A center (CU(A)) of subunit 2 and heme A of subunit 1 to the active site in subunit 1, a binuclear center (BNC) formed by heme A3 and copper B (CU(B)). The BNC reduces molecular oxygen to 2 water molecules using 4 electrons from cytochrome c in the IMS and 4 protons from the mitochondrial matrix. This chain is Cytochrome c oxidase subunit 2 (MT-CO2), found in Homo sapiens (Human).